The primary structure comprises 393 residues: Ribonucleoside-diphosphate reductase subunit M2 (393 aa).

Phosphoserine is present on S18. Fe cation contacts are provided by D142, E173, and H176. Y180 is an active-site residue. Residues E236, E270, and H273 each coordinate Fe cation.

The protein belongs to the ribonucleoside diphosphate reductase small chain family. In terms of assembly, heterodimer of a large and a small subunit. Requires Fe cation as cofactor.

The protein localises to the cytoplasm. It carries out the reaction a 2'-deoxyribonucleoside 5'-diphosphate + [thioredoxin]-disulfide + H2O = a ribonucleoside 5'-diphosphate + [thioredoxin]-dithiol. Provides the precursors necessary for DNA synthesis. Catalyzes the biosynthesis of deoxyribonucleotides from the corresponding ribonucleotides. This Drosophila melanogaster (Fruit fly) protein is Ribonucleoside-diphosphate reductase subunit M2 (RnrS).